The sequence spans 596 residues: Actin-histidine N-methyltransferase (596 aa).

Residues 1-22 form a disordered region; that stretch reads MGKKSRVKTQKSGTGATATVSP. Residues 10–20 show a composition bias toward polar residues; that stretch reads QKSGTGATATV. S-adenosyl-L-methionine contacts are provided by residues R75, 104–106, R254, 275–279, and 325–327; these read EGF, DMCNH, and SGF. The 221-residue stretch at 94-314 folds into the SET domain; the sequence is EGFEMVNFKE…AGDQIYIFYG (221 aa). The segment at 551–596 is disordered; that stretch reads GLVNGESLIPNGTRSENESLSPEESENTTGDTEESSGSMDAVKERL. The span at 571-584 shows a compositional bias: acidic residues; sequence SPEESENTTGDTEE.

The protein belongs to the class V-like SAM-binding methyltransferase superfamily. SETD3 actin-histidine methyltransferase family. In terms of assembly, interacts with MYOD1. In terms of processing, phosphorylated by GSK3B, which is required for recognition by the SCF(FBXW7) complex and subsequent degradation. Post-translationally, ubiquitinated by the SCF(FBXW7) complex following phosphorylation by GSK3B, leading to its degradation by the proteasome.

It localises to the cytoplasm. The protein localises to the nucleus. The catalysed reaction is L-histidyl-[protein] + S-adenosyl-L-methionine = N(tele)-methyl-L-histidyl-[protein] + S-adenosyl-L-homocysteine + H(+). Its function is as follows. Protein-histidine N-methyltransferase that specifically mediates 3-methylhistidine (tele-methylhistidine) methylation of actin at 'His-73'. Histidine methylation of actin is required for smooth muscle contraction of the laboring uterus during delivery. Does not have protein-lysine N-methyltransferase activity and probably only catalyzes histidine methylation of actin. In Rattus norvegicus (Rat), this protein is Actin-histidine N-methyltransferase.